Here is a 981-residue protein sequence, read N- to C-terminus: uncharacterized protein (981 aa).

Disordered stretches follow at residues 65-133 (NIDN…SNNS), 149-463 (SSNS…NKIE), 491-580 (SNNI…DSPL), 592-834 (EQTN…LNQV), and 861-891 (VQNDTNSSPISQQLSTSSSPFKSTGGSNDGN). Positions 75–88 (SSDDDDDDDDDDDY) are enriched in acidic residues. 3 stretches are compositionally biased toward low complexity: residues 89 to 133 (NNNN…SNNS), 149 to 158 (SSNSINNNDN), and 170 to 181 (SAKTTSSLTSSK). Positions 182 to 195 (RSLDSRNRNRDRSY) are enriched in basic and acidic residues. Residues 196 to 206 (TRSRSRSRSRS) show a composition bias toward basic residues. The span at 207-227 (YSRGFSSLSRSRSRSRSISSR) shows a compositional bias: low complexity. Basic residues predominate over residues 228 to 269 (SRSRSRSRRSRSRSSRSRSRSRSKSKSKSRRSRSRSRSRRSR). Positions 270–292 (SRSDSRSRSDSRGRSRSRSDSRK) are enriched in basic and acidic residues. The span at 314-358 (SSKRHQNSRKRNRSYSRSRTRSWSRSRTRSRSRRRYGGRTFRSPR) shows a compositional bias: basic residues. Residues 359 to 452 (RSRDDSRDRG…SQSPHNEKNK (94 aa)) show a composition bias toward basic and acidic residues. A compositionally biased stretch (low complexity) spans 491 to 553 (SNNINNNNIK…SHNNTNGNVN (63 aa)). 2 stretches are compositionally biased toward polar residues: residues 554–576 (GVSKTTSSPASDNSTPENISTDL) and 605–622 (ESNNNGNDRFKTKCSSTE). Residues 623–634 (NENKNRENEKNN) show a composition bias toward basic and acidic residues. Composition is skewed to low complexity over residues 635–820 (SENS…NNNS) and 867–891 (SSPISQQLSTSSSPFKSTGGSNDGN).

This is an uncharacterized protein from Dictyostelium discoideum (Social amoeba).